A 353-amino-acid polypeptide reads, in one-letter code: Probable WRKY transcription factor 7 (353 aa).

Residues 117 to 259 are disordered; sequence VEEKKPETSS…SSRCHCSKKR (143 aa). A compositionally biased stretch (low complexity) spans 158-176; the sequence is SHNNNNNQNQTKNGSSSSS. 2 stretches are compositionally biased toward polar residues: residues 184 to 204 and 213 to 229; these read APST…SFMS and THMS…QLSG. A DNA-binding region (WRKY) is located at residues 275 to 341; sequence KMADIPSDEF…YEGDHNHALV (67 aa).

Belongs to the WRKY group II-d family. In terms of tissue distribution, in young, mature and senescent leaves.

Its subcellular location is the nucleus. Its function is as follows. Transcription factor. Interacts specifically with the W box (5'-(T)TGAC[CT]-3'), a frequently occurring elicitor-responsive cis-acting element. In Arabidopsis thaliana (Mouse-ear cress), this protein is Probable WRKY transcription factor 7 (WRKY7).